Here is a 327-residue protein sequence, read N- to C-terminus: Zinc transport protein ZntB (327 aa).

The Cytoplasmic portion of the chain corresponds to 1 to 273; it reads MEAIKGSDVN…ARRTYTMSLM (273 aa). Residues 274 to 294 traverse the membrane as a helical segment; that stretch reads AMVFLPSTFLTGLFGVNLGGI. Topologically, residues 295 to 300 are periplasmic; sequence PGGGWQ. A helical membrane pass occupies residues 301 to 321; the sequence is FGFSIFCILLVVLIGGVALWL. Topologically, residues 322-327 are cytoplasmic; it reads HRSKWL.

It belongs to the CorA metal ion transporter (MIT) (TC 1.A.35) family.

It localises to the cell inner membrane. The enzyme catalyses Zn(2+)(out) + H(+)(out) = Zn(2+)(in) + H(+)(in). Functionally, zinc transporter. Acts as a Zn(2+):proton symporter, which likely mediates zinc ion uptake. The polypeptide is Zinc transport protein ZntB (Escherichia coli O139:H28 (strain E24377A / ETEC)).